The primary structure comprises 349 residues: Anthranilate phosphoribosyltransferase (349 aa).

5-phospho-alpha-D-ribose 1-diphosphate-binding positions include Gly82, Gly85–Asp86, Asn92–Thr95, Lys110–Gly118, and Ser122. Residue Gly82 coordinates anthranilate. Ser94 contributes to the Mg(2+) binding site. Asn113 lines the anthranilate pocket. Arg168 is an anthranilate binding site. 2 residues coordinate Mg(2+): Asp227 and Glu228.

It belongs to the anthranilate phosphoribosyltransferase family. In terms of assembly, homodimer. It depends on Mg(2+) as a cofactor.

The catalysed reaction is N-(5-phospho-beta-D-ribosyl)anthranilate + diphosphate = 5-phospho-alpha-D-ribose 1-diphosphate + anthranilate. It participates in amino-acid biosynthesis; L-tryptophan biosynthesis; L-tryptophan from chorismate: step 2/5. Catalyzes the transfer of the phosphoribosyl group of 5-phosphorylribose-1-pyrophosphate (PRPP) to anthranilate to yield N-(5'-phosphoribosyl)-anthranilate (PRA). This chain is Anthranilate phosphoribosyltransferase, found in Pseudomonas entomophila (strain L48).